We begin with the raw amino-acid sequence, 255 residues long: Imidazole glycerol phosphate synthase subunit HisF (255 aa).

Catalysis depends on residues aspartate 12 and aspartate 131.

Belongs to the HisA/HisF family. Heterodimer of HisH and HisF.

Its subcellular location is the cytoplasm. The enzyme catalyses 5-[(5-phospho-1-deoxy-D-ribulos-1-ylimino)methylamino]-1-(5-phospho-beta-D-ribosyl)imidazole-4-carboxamide + L-glutamine = D-erythro-1-(imidazol-4-yl)glycerol 3-phosphate + 5-amino-1-(5-phospho-beta-D-ribosyl)imidazole-4-carboxamide + L-glutamate + H(+). It functions in the pathway amino-acid biosynthesis; L-histidine biosynthesis; L-histidine from 5-phospho-alpha-D-ribose 1-diphosphate: step 5/9. In terms of biological role, IGPS catalyzes the conversion of PRFAR and glutamine to IGP, AICAR and glutamate. The HisF subunit catalyzes the cyclization activity that produces IGP and AICAR from PRFAR using the ammonia provided by the HisH subunit. This Ruthia magnifica subsp. Calyptogena magnifica protein is Imidazole glycerol phosphate synthase subunit HisF.